Reading from the N-terminus, the 76-residue chain is Omega-conotoxin-like Ai6.3 (76 aa).

The N-terminal stretch at 1-22 is a signal peptide; the sequence is MKLTCLMIVAVLFLTAWTFVTA. Residues 23–50 constitute a propeptide that is removed on maturation; that stretch reads VPDSSNALENLYLKAHHEMNNPEDSELN. 3 disulfides stabilise this stretch: Cys53/Cys67, Cys60/Cys71, and Cys66/Cys75.

Belongs to the conotoxin O1 superfamily. Expressed by the venom duct.

It localises to the secreted. In terms of biological role, omega-conotoxins act at presynaptic membranes, they bind and block voltage-gated calcium channels (Cav). The chain is Omega-conotoxin-like Ai6.3 from Conus ammiralis (Admiral cone).